The chain runs to 368 residues: MDMSERIIVTYQVAAAPAEIAARAEALAIEQSVECPLAAVTEQQIRDEIVGRVEAIAPIGETRFSVRVSLASATAPAEPGQLLNMLFGNSSIQPDVTLADVELPPAYPAAFGGPKLGISGLRAKLGAPRRALTGSALKPQGLAPEALAGLAHRLALGGVDLIKDDHGIADQAFSPFAARVPAVARAMREACAVRGAAMLYAPHVSGSLDDMRRQLDIVRREGLSVVMLMPMIVGLANFHLIAKEAEGLIVLAHPSLAGAQRIAPDLLLGKLFRLLGADATIFPHYGGRFAYTPETCRALADAARRDWHDLKPCLPVPAGGIAIDRIKELLAFYGTDVMLLIGGSLLAAGEQLTEHAARFTAEVASHGQ.

Belongs to the RuBisCO large chain family. Type IV subfamily.

Functionally, unknown. Probably does not have RuBisCO activity. This chain is Ribulose bisphosphate carboxylase-like protein 1 (rlp1), found in Rhodopseudomonas palustris (strain ATCC BAA-98 / CGA009).